The primary structure comprises 426 residues: Serine hydroxymethyltransferase (426 aa).

(6S)-5,6,7,8-tetrahydrofolate-binding positions include Leu111 and Gly115–Leu117. Lys220 bears the N6-(pyridoxal phosphate)lysine mark.

The protein belongs to the SHMT family. Homodimer. The cofactor is pyridoxal 5'-phosphate.

Its subcellular location is the cytoplasm. It carries out the reaction (6R)-5,10-methylene-5,6,7,8-tetrahydrofolate + glycine + H2O = (6S)-5,6,7,8-tetrahydrofolate + L-serine. Its pathway is one-carbon metabolism; tetrahydrofolate interconversion. The protein operates within amino-acid biosynthesis; glycine biosynthesis; glycine from L-serine: step 1/1. In terms of biological role, catalyzes the reversible interconversion of serine and glycine with tetrahydrofolate (THF) serving as the one-carbon carrier. This reaction serves as the major source of one-carbon groups required for the biosynthesis of purines, thymidylate, methionine, and other important biomolecules. Also exhibits THF-independent aldolase activity toward beta-hydroxyamino acids, producing glycine and aldehydes, via a retro-aldol mechanism. The sequence is that of Serine hydroxymethyltransferase from Orientia tsutsugamushi (strain Ikeda) (Rickettsia tsutsugamushi).